The chain runs to 813 residues: MTNISSIPATSRSPTRVLRFLDRTLRLIASPQQRRLTRYRALADRILALDGETRALSDAALRQRADDLRHRARAGASLDALTIPTFALVREAARRTLGEAHVVEQLIGALALRDGAIAEMKTGEGKTLTATLVAALHALAGRGVHLAAPNDYLAARDADWMRPIYALLGFGVGLITPEIDDDARRAAYACDVTYGVASEFGLDFLRDHLKFCADETVQRGHGFALVDEADATLIDDAGVPLALDGPLGDQSDFYHAVDAIVAALTPEHYELDQRRRVALTDAGYDAIDHALRQAGLLKPDASLHDTASIALLHHVMQALRARTLLKRDRDYVVAHDEVVIVDAFTGRMLPGRRYDDALHQALEAKENCPIGEETRTLASITFQSYFRRYDKLAGMTGTAGDEIEEYRQIYGLDVVAIPPHRPMIRRDAQMLHRTRDEALAAVLAELEAAHAIGQPVLIGTPSIAACDRVAATLEANGWQRSRDRGPRRFAVLNAKHHADEARIIAQAGRPFAVTLATAMAGRGTDIKLGGTPFDAALQAQARGAGGLLVIGTEHHAHRRRDAQLRGRAGRQGDPGRSVVHASIDDELLRGHPAPVSAGNGPMEPATAQRLIDAAQRRREARSFDQRLALSRFDAVIERQRDALIAQRAAIRDDPAPLQLVAQLRNDTIDDLMQQFAPPQAAWDIENLDAAVRSILTLAVPIAEPGDDRAAAAIALQARIGAIADDWMAGKVHAIGEAAIGAILRRVMLALLDQLWTEQTERLEHLKRMIGDRHLPPHRLLPEFQLEAFALFELLAKEFRHEVTAHAMRLGRPS.

Residues glutamine 105, 123-127 (GEGKT), and aspartate 525 contribute to the ATP site.

It belongs to the SecA family. Monomer and homodimer. Part of the essential Sec protein translocation apparatus which comprises SecA, SecYEG and auxiliary proteins SecDF-YajC and YidC.

It localises to the cell inner membrane. The protein resides in the cytoplasm. The enzyme catalyses ATP + H2O + cellular proteinSide 1 = ADP + phosphate + cellular proteinSide 2.. Part of the Sec protein translocase complex. Interacts with the SecYEG preprotein conducting channel. Has a central role in coupling the hydrolysis of ATP to the transfer of proteins into and across the cell membrane, serving both as a receptor for the preprotein-SecB complex and as an ATP-driven molecular motor driving the stepwise translocation of polypeptide chains across the membrane. The protein is Protein translocase subunit SecA 2 of Rhodopseudomonas palustris (strain BisA53).